The chain runs to 94 residues: Co-chaperonin GroES (94 aa).

This sequence belongs to the GroES chaperonin family. Heptamer of 7 subunits arranged in a ring. Interacts with the chaperonin GroEL.

Its subcellular location is the cytoplasm. Together with the chaperonin GroEL, plays an essential role in assisting protein folding. The GroEL-GroES system forms a nano-cage that allows encapsulation of the non-native substrate proteins and provides a physical environment optimized to promote and accelerate protein folding. GroES binds to the apical surface of the GroEL ring, thereby capping the opening of the GroEL channel. This Bacillus cereus (strain ATCC 14579 / DSM 31 / CCUG 7414 / JCM 2152 / NBRC 15305 / NCIMB 9373 / NCTC 2599 / NRRL B-3711) protein is Co-chaperonin GroES.